The chain runs to 674 residues: Linear primary-alkylsulfatase (674 aa).

The first 41 residues, 1–41 (MKLNALSTATHGSRSSPVKLWKFSTSFLLAASIIVSGQSWA), serve as a signal peptide directing secretion. 6 residues coordinate Zn(2+): His-192, His-194, Asp-196, His-197, Glu-303, and Glu-322. Sulfate contacts are provided by residues 330–335 (NTYSLR) and Arg-340. Residue His-367 coordinates Zn(2+). Tyr-428 provides a ligand contact to sulfate.

It belongs to the metallo-beta-lactamase superfamily. Type III sulfatase family. Homodimer. Zn(2+) is required as a cofactor.

It is found in the periplasm. It catalyses the reaction a primary linear alkyl sulfate ester + H2O = a primary alcohol + sulfate + H(+). With respect to regulation, inhibited by EDTA. Slightly activated in the presence of Ca(2+). Its function is as follows. Alkylsulfatase that cleaves primary alkyl sulfates such as sodium octyl sulfate and the widely used detergent sodium dodecyl sulfate (SDS). In Pseudomonas sp, this protein is Linear primary-alkylsulfatase.